A 152-amino-acid chain; its full sequence is Transcriptional repressor NrdR (152 aa).

A zinc finger spans residues 3 to 34; it reads CPFCNAADSKVIDSRLAAEGCQIRRRRECVSC. Residues 49–139 enclose the ATP-cone domain; sequence PRVIKSNGKN…VYQDFQDVEA (91 aa).

Belongs to the NrdR family. Zn(2+) serves as cofactor.

In terms of biological role, negatively regulates transcription of bacterial ribonucleotide reductase nrd genes and operons by binding to NrdR-boxes. This is Transcriptional repressor NrdR from Acinetobacter baumannii (strain AB0057).